The primary structure comprises 344 residues: GTP 3',8-cyclase (344 aa).

One can recognise a Radical SAM core domain in the interval 19–245; the sequence is PFGRAVTYLR…DIPYRTGGPA (227 aa). Arg-28 provides a ligand contact to GTP. [4Fe-4S] cluster is bound by residues Cys-35 and Cys-39. An S-adenosyl-L-methionine-binding site is contributed by Tyr-41. Cys-42 provides a ligand contact to [4Fe-4S] cluster. Position 77 (Arg-77) interacts with GTP. Gly-81 provides a ligand contact to S-adenosyl-L-methionine. Position 111 (Thr-111) interacts with GTP. Position 135 (Ser-135) interacts with S-adenosyl-L-methionine. Lys-171 provides a ligand contact to GTP. Met-205 is an S-adenosyl-L-methionine binding site. 2 residues coordinate [4Fe-4S] cluster: Cys-268 and Cys-271. Residue 273-275 participates in GTP binding; it reads RVR. Cys-285 serves as a coordination point for [4Fe-4S] cluster.

Belongs to the radical SAM superfamily. MoaA family. Monomer and homodimer. It depends on [4Fe-4S] cluster as a cofactor.

The catalysed reaction is GTP + AH2 + S-adenosyl-L-methionine = (8S)-3',8-cyclo-7,8-dihydroguanosine 5'-triphosphate + 5'-deoxyadenosine + L-methionine + A + H(+). It participates in cofactor biosynthesis; molybdopterin biosynthesis. In terms of biological role, catalyzes the cyclization of GTP to (8S)-3',8-cyclo-7,8-dihydroguanosine 5'-triphosphate. This is GTP 3',8-cyclase from Brucella abortus (strain S19).